Reading from the N-terminus, the 256-residue chain is Dihydroorotate dehydrogenase B (NAD(+)), electron transfer subunit (256 aa).

The FAD-binding FR-type domain occupies 2-100 (IRLETMKVVA…MGPQGNGFDL (99 aa)). Residues 51–54 (RPIS), 68–70 (IYR), and 75–76 (GT) each bind FAD. Residues Cys220, Cys225, Cys228, and Cys243 each contribute to the [2Fe-2S] cluster site.

The protein belongs to the PyrK family. Heterotetramer of 2 PyrK and 2 PyrD type B subunits. [2Fe-2S] cluster serves as cofactor. The cofactor is FAD.

It participates in pyrimidine metabolism; UMP biosynthesis via de novo pathway; orotate from (S)-dihydroorotate (NAD(+) route): step 1/1. Functionally, responsible for channeling the electrons from the oxidation of dihydroorotate from the FMN redox center in the PyrD type B subunit to the ultimate electron acceptor NAD(+). The protein is Dihydroorotate dehydrogenase B (NAD(+)), electron transfer subunit of Streptococcus pneumoniae (strain ATCC BAA-255 / R6).